We begin with the raw amino-acid sequence, 65 residues long: Large ribosomal subunit protein bL33c (65 aa).

It belongs to the bacterial ribosomal protein bL33 family.

Its subcellular location is the plastid. It localises to the chloroplast. This Chara vulgaris (Common stonewort) protein is Large ribosomal subunit protein bL33c.